A 238-amino-acid chain; its full sequence is Orotidine 5'-phosphate decarboxylase (238 aa).

Substrate-binding positions include Asp-10, Lys-32, 59-68 (DLKLHDIPNT), Thr-122, Arg-184, Gln-193, Gly-213, and Arg-214. Lys-61 functions as the Proton donor in the catalytic mechanism.

The protein belongs to the OMP decarboxylase family. Type 1 subfamily. Homodimer.

The enzyme catalyses orotidine 5'-phosphate + H(+) = UMP + CO2. The protein operates within pyrimidine metabolism; UMP biosynthesis via de novo pathway; UMP from orotate: step 2/2. Functionally, catalyzes the decarboxylation of orotidine 5'-monophosphate (OMP) to uridine 5'-monophosphate (UMP). The chain is Orotidine 5'-phosphate decarboxylase from Bacillus cereus (strain Q1).